Consider the following 243-residue polypeptide: Carboxy-S-adenosyl-L-methionine synthase (243 aa).

Residues Y39, 64 to 66 (GCS), 89 to 90 (DN), 117 to 118 (DL), N132, and R199 each bind S-adenosyl-L-methionine.

It belongs to the class I-like SAM-binding methyltransferase superfamily. Cx-SAM synthase family. In terms of assembly, homodimer.

The enzyme catalyses prephenate + S-adenosyl-L-methionine = carboxy-S-adenosyl-L-methionine + 3-phenylpyruvate + H2O. Its function is as follows. Catalyzes the conversion of S-adenosyl-L-methionine (SAM) to carboxy-S-adenosyl-L-methionine (Cx-SAM). The polypeptide is Carboxy-S-adenosyl-L-methionine synthase (Pseudoalteromonas atlantica (strain T6c / ATCC BAA-1087)).